We begin with the raw amino-acid sequence, 349 residues long: Phenylalanine--tRNA ligase alpha subunit (349 aa).

E258 lines the Mg(2+) pocket.

It belongs to the class-II aminoacyl-tRNA synthetase family. Phe-tRNA synthetase alpha subunit type 1 subfamily. As to quaternary structure, tetramer of two alpha and two beta subunits. Mg(2+) serves as cofactor.

The protein localises to the cytoplasm. It carries out the reaction tRNA(Phe) + L-phenylalanine + ATP = L-phenylalanyl-tRNA(Phe) + AMP + diphosphate + H(+). The protein is Phenylalanine--tRNA ligase alpha subunit of Rickettsia akari (strain Hartford).